The primary structure comprises 132 residues: Large ribosomal subunit protein bL17 (132 aa).

Belongs to the bacterial ribosomal protein bL17 family. As to quaternary structure, part of the 50S ribosomal subunit. Contacts protein L32.

This is Large ribosomal subunit protein bL17 from Ruthia magnifica subsp. Calyptogena magnifica.